We begin with the raw amino-acid sequence, 229 residues long: Aldehyde oxidoreductase iron-sulfur-binding subunit PaoA (229 aa).

A disordered region spans residues 1–21 (MSNQGEYPEDNRVGKHEPHDL). Residues 1–53 (MSNQGEYPEDNRVGKHEPHDLSLTRRDLIKVSAATAATAVVYPHSTLAASVPA) constitute a signal peptide (tat-type signal). A compositionally biased stretch (basic and acidic residues) spans 9-21 (EDNRVGKHEPHDL). One can recognise a 2Fe-2S ferredoxin-type domain in the interval 61–137 (MPLTLKVNGK…GAEITTIEGL (77 aa)). 9 residues coordinate [2Fe-2S] cluster: C99, C104, G105, C107, C119, C158, C161, C208, and C210.

Heterotrimer composed of PaoA, PaoB and PaoC. [2Fe-2S] cluster serves as cofactor. Post-translationally, exported by the Tat system. The position of the signal peptide cleavage has not been experimentally proven.

The protein localises to the periplasm. The catalysed reaction is an aldehyde + A + H2O = a carboxylate + AH2 + H(+). With respect to regulation, the complex requires PaoD for activity. Functionally, oxidizes aldehydes to the corresponding carboxylic acids with a preference for aromatic aldehydes. It might play a role in the detoxification of aldehydes to avoid cell damage. This Escherichia coli (strain K12) protein is Aldehyde oxidoreductase iron-sulfur-binding subunit PaoA.